The sequence spans 187 residues: MADADLANIVTTRRDESMGWLQSIVSKGLGWARKYSLFTYPYATACCGMEYMSVAASRHDISRFGAEFPRFSPRQADLLMVVGTINLKQAPILKRVYEQMAEPKWVVAFGVCASSGGFYDNYAVLQGIDRIIPVDVYIPGCPPRPEQVLDGLMLLQDKIGNQVHRIAEREEANPTAARHNLLLSMNK.

Residues C46, C47, C112, and C141 each contribute to the [4Fe-4S] cluster site.

This sequence belongs to the complex I 20 kDa subunit family. As to quaternary structure, NDH-1 is composed of 14 different subunits. Subunits NuoB, C, D, E, F, and G constitute the peripheral sector of the complex. The cofactor is [4Fe-4S] cluster.

The protein resides in the cell inner membrane. It carries out the reaction a quinone + NADH + 5 H(+)(in) = a quinol + NAD(+) + 4 H(+)(out). Its function is as follows. NDH-1 shuttles electrons from NADH, via FMN and iron-sulfur (Fe-S) centers, to quinones in the respiratory chain. The immediate electron acceptor for the enzyme in this species is believed to be ubiquinone. Couples the redox reaction to proton translocation (for every two electrons transferred, four hydrogen ions are translocated across the cytoplasmic membrane), and thus conserves the redox energy in a proton gradient. In Myxococcus xanthus (strain DK1622), this protein is NADH-quinone oxidoreductase subunit B.